A 1047-amino-acid chain; its full sequence is Ubiquitin carboxyl-terminal hydrolase 28 (1047 aa).

2 disordered regions span residues Asp60–Lys95 and Ser110–Val138. The 20-residue stretch at Glu94–Ala113 folds into the UIM domain. Residues Pro111–Lys128 show a composition bias toward basic and acidic residues. The USP domain maps to Val156–Asp651. Cys165 serves as the catalytic Nucleophile. A compositionally biased stretch (polar residues) spans Ser461 to Asp486. The disordered stretch occupies residues Ser461–Cys528. Positions Leu489–Asp498 are enriched in basic and acidic residues. The segment covering Ala504–Leu516 has biased composition (polar residues). The Proton acceptor role is filled by His601. The segment at Glu694–Leu735 is disordered. Polar residues predominate over residues Lys705–Ser717.

The protein belongs to the peptidase C19 family. USP28 subfamily.

It is found in the nucleus. The protein localises to the nucleoplasm. The catalysed reaction is Thiol-dependent hydrolysis of ester, thioester, amide, peptide and isopeptide bonds formed by the C-terminal Gly of ubiquitin (a 76-residue protein attached to proteins as an intracellular targeting signal).. Deubiquitinase involved in DNA damage response checkpoint and MYC proto-oncogene stability. Involved in DNA damage induced apoptosis by specifically deubiquitinating proteins of the DNA damage pathway such as CLSPN. Also involved in G2 DNA damage checkpoint, by deubiquitinating CLSPN, and preventing its degradation by the anaphase promoting complex/cyclosome (APC/C). Specifically deubiquitinates MYC in the nucleoplasm, leading to prevent MYC degradation by the proteasome. Deubiquitinates ZNF304, hence may prevent ZNF304 degradation by the proteasome, leading to the activated KRAS-mediated promoter hypermethylation and transcriptional silencing of tumor suppressor genes (TSGs). The sequence is that of Ubiquitin carboxyl-terminal hydrolase 28 (USP28) from Gallus gallus (Chicken).